The following is a 608-amino-acid chain: Phosphatidylinositol/phosphatidylcholine transfer protein SFH4 (608 aa).

Residues 1–33 (MSGPLDRFTSPCFSNNGEKREKKSDFEVSEDEK) are disordered. Residues 17-33 (GEKREKKSDFEVSEDEK) are compositionally biased toward basic and acidic residues. The CRAL-TRIO domain maps to 146–320 (ELDEVLRYYP…FFGGTCTCAD (175 aa)). Residues 358–403 (DSQISSSDKPTYSLKVSDTSTAKSGSELEEMASPKTNTNNHVPKLT) form a disordered region. The span at 371 to 381 (LKVSDTSTAKS) shows a compositional bias: polar residues. Residues 526–572 (ISSVLSRLGDLEKQIENLHSRKSEMPHEKEELLNAAVYRVDALEAEL) are a coiled coil.

Belongs to the SFH family.

Its subcellular location is the golgi apparatus membrane. It localises to the cell membrane. Required for transport of secretory proteins from the Golgi complex. Catalyzes the transfer of phosphatidylinositol and phosphatidylcholine between membranes in vitro. This chain is Phosphatidylinositol/phosphatidylcholine transfer protein SFH4 (SFH4), found in Arabidopsis thaliana (Mouse-ear cress).